The sequence spans 189 residues: MTEYKLVVVGAGGVGKSALTIQLIQNHFVDEYDPTIEDSYRKQVVIDGETCLLDILDTAGQEEYSAMRDQYMRTGEGFLLVFAVNSAKSFEDIGTYREQIKRVKDAEEVPMVLVGNKCDLASWNVNNEQAREVAKQYGIPYIETSAKTRMGVDDAFYTLVREIRKDKDNKGRRGRKMNKPNRRFKCKML.

Position 10–17 (10–17 (GAGGVGKS)) interacts with GTP. Residues 32–40 (YDPTIEDSY) carry the Effector region motif. Residues 57-61 (DTAGQ) and 116-119 (NKCD) each bind GTP. Cysteine 186 carries the post-translational modification Cysteine methyl ester. The S-geranylgeranyl cysteine moiety is linked to residue cysteine 186. A propeptide spans 187–189 (KML) (removed in mature form).

Belongs to the small GTPase superfamily. Ras family.

The protein localises to the cell membrane. The catalysed reaction is GTP + H2O = GDP + phosphate + H(+). Alternates between an inactive form bound to GDP and an active form bound to GTP. Activated by a guanine nucleotide-exchange factor (GEF) and inactivated by a GTPase-activating protein (GAP). Functionally, ras proteins bind GDP/GTP and possess intrinsic GTPase activity. Plays a role in eye development by regulating cell growth, survival of postmitotic ommatidial cells and differentiation of photoreceptor cells. During larval development, mediates Ptth/tor signaling leading to the production of ecdysone, a hormone required for the initiation of metamorphosis. In Drosophila ananassae (Fruit fly), this protein is Ras-like protein 1.